The primary structure comprises 507 residues: 25-hydroxyvitamin D-1 alpha hydroxylase, mitochondrial (507 aa).

A heme-binding site is contributed by cysteine 454.

Belongs to the cytochrome P450 family. Heme is required as a cofactor. In terms of tissue distribution, kidney.

Its subcellular location is the mitochondrion membrane. The catalysed reaction is calcidiol + 2 reduced [adrenodoxin] + O2 + 2 H(+) = calcitriol + 2 oxidized [adrenodoxin] + H2O. The enzyme catalyses secalciferol + 2 reduced [adrenodoxin] + O2 + 2 H(+) = calcitetrol + 2 oxidized [adrenodoxin] + H2O. It catalyses the reaction 25-hydroxy-24-oxocalciol + 2 reduced [adrenodoxin] + O2 + 2 H(+) = (1S)-1,25-dihydroxy-24-oxocalciol + 2 oxidized [adrenodoxin] + H2O. It carries out the reaction 25-hydroxyvitamin D2 + 2 reduced [adrenodoxin] + O2 + 2 H(+) = 1alpha,25-dihydroxyvitamin D2 + 2 oxidized [adrenodoxin] + H2O. It functions in the pathway hormone biosynthesis; vitamin D biosynthesis. Activated by cardiolipin and dioleoyl phosphatidylethanolamine (DOPE), phospholipids found in the inner mitochondrial membrane. Inhibited by high substrate concentration. Functionally, a cytochrome P450 monooxygenase involved in vitamin D metabolism and in calcium and phosphorus homeostasis. Catalyzes the rate-limiting step in the activation of vitamin D in the kidney, namely the hydroxylation of 25-hydroxyvitamin D3/calcidiol at the C1-alpha position to form the hormonally active form of vitamin D3, 1alpha,25-dihydroxyvitamin D3/calcitriol that acts via the vitamin D receptor (VDR). Has 1-alpha-hydroxylase activity on vitamin D intermediates of the CYP24A1-mediated inactivation pathway. Converts 24R,25-dihydroxyvitamin D3/secalciferol to 1-alpha,24,25-trihydroxyvitamin D3, an active ligand of VDR. Also active on 25-hydroxyvitamin D2. Mechanistically, uses molecular oxygen inserting one oxygen atom into a substrate, and reducing the second into a water molecule, with two electrons provided by NADPH via FDXR/adrenodoxin reductase and FDX1/adrenodoxin. The polypeptide is 25-hydroxyvitamin D-1 alpha hydroxylase, mitochondrial (Cyp27b1) (Mus musculus (Mouse)).